The sequence spans 272 residues: PHD finger protein ALFIN-LIKE 6 (272 aa).

Over residues 1-23 (MEGGGGGGGGGGGGGGGGGGGGA) the composition is skewed to gly residues. Disordered regions lie at residues 1-24 (MEGG…GGAP) and 162-218 (QAKE…DNTL). Low complexity predominate over residues 168 to 182 (PNSSSKSNKPSSKVQ). Residues 183-200 (SKAESRSKSKLSAPKDEE) show a composition bias toward basic and acidic residues. The segment covering 201–214 (GSGDDEGEEEEDDH) has biased composition (acidic residues). Residues 216-268 (NTLCGTCGTNDGKDEFWICCDNCEKWYHGKCVKITPARAEHIKQYKCPDCTNK) form a PHD-type zinc finger.

The protein belongs to the Alfin family.

It is found in the nucleus. Functionally, histone-binding component that specifically recognizes H3 tails trimethylated on 'Lys-4' (H3K4me3), which mark transcription start sites of virtually all active genes. The protein is PHD finger protein ALFIN-LIKE 6 of Oryza sativa subsp. japonica (Rice).